The chain runs to 250 residues: Small ribosomal subunit protein uS2 (250 aa).

The protein belongs to the universal ribosomal protein uS2 family.

The protein is Small ribosomal subunit protein uS2 of Acidovorax sp. (strain JS42).